A 150-amino-acid chain; its full sequence is UPF0756 membrane protein Dd703_1075 (150 aa).

4 consecutive transmembrane segments (helical) span residues L8–L28, Y51–G71, A81–G101, and V114–V134.

Belongs to the UPF0756 family.

The protein resides in the cell membrane. The chain is UPF0756 membrane protein Dd703_1075 from Musicola paradisiaca (strain Ech703) (Dickeya paradisiaca).